A 252-amino-acid chain; its full sequence is 5'-nucleotidase SurE (252 aa).

4 residues coordinate a divalent metal cation: Asp8, Asp9, Ser39, and Asn95.

This sequence belongs to the SurE nucleotidase family. A divalent metal cation is required as a cofactor.

It localises to the cytoplasm. It catalyses the reaction a ribonucleoside 5'-phosphate + H2O = a ribonucleoside + phosphate. Functionally, nucleotidase that shows phosphatase activity on nucleoside 5'-monophosphates. The protein is 5'-nucleotidase SurE of Clostridium botulinum (strain Okra / Type B1).